A 392-amino-acid polypeptide reads, in one-letter code: L-rhamnonate dehydratase (392 aa).

H22 and R48 together coordinate substrate. Mg(2+) is bound by residues D214, E240, and E268. H318 acts as the Proton acceptor in catalysis. E338 is a substrate binding site.

This sequence belongs to the mandelate racemase/muconate lactonizing enzyme family. RhamD subfamily. Homooctamer; tetramer of dimers. It depends on Mg(2+) as a cofactor.

The catalysed reaction is L-rhamnonate = 2-dehydro-3-deoxy-L-rhamnonate + H2O. Its function is as follows. Catalyzes the dehydration of L-rhamnonate to 2-keto-3-deoxy-L-rhamnonate (KDR). In Burkholderia orbicola (strain MC0-3), this protein is L-rhamnonate dehydratase.